We begin with the raw amino-acid sequence, 191 residues long: Protein GrpE (191 aa).

Composition is skewed to basic and acidic residues over residues 1-19 (MKDEHNQEHDHLSQKEPES) and 29-42 (QQGEEKQEASEKEC). The disordered stretch occupies residues 1–42 (MKDEHNQEHDHLSQKEPESYQKACACKEQQGEEKQEASEKEC).

Belongs to the GrpE family. In terms of assembly, homodimer.

Its subcellular location is the cytoplasm. Functionally, participates actively in the response to hyperosmotic and heat shock by preventing the aggregation of stress-denatured proteins, in association with DnaK and GrpE. It is the nucleotide exchange factor for DnaK and may function as a thermosensor. Unfolded proteins bind initially to DnaJ; upon interaction with the DnaJ-bound protein, DnaK hydrolyzes its bound ATP, resulting in the formation of a stable complex. GrpE releases ADP from DnaK; ATP binding to DnaK triggers the release of the substrate protein, thus completing the reaction cycle. Several rounds of ATP-dependent interactions between DnaJ, DnaK and GrpE are required for fully efficient folding. The chain is Protein GrpE from Helicobacter pylori (strain HPAG1).